A 287-amino-acid chain; its full sequence is uncharacterized protein (287 aa).

This is an uncharacterized protein from Archaeoglobus fulgidus (strain ATCC 49558 / DSM 4304 / JCM 9628 / NBRC 100126 / VC-16).